The primary structure comprises 197 residues: 3-isopropylmalate dehydratase small subunit (197 aa).

This sequence belongs to the LeuD family. LeuD type 1 subfamily. As to quaternary structure, heterodimer of LeuC and LeuD.

It carries out the reaction (2R,3S)-3-isopropylmalate = (2S)-2-isopropylmalate. Its pathway is amino-acid biosynthesis; L-leucine biosynthesis; L-leucine from 3-methyl-2-oxobutanoate: step 2/4. Functionally, catalyzes the isomerization between 2-isopropylmalate and 3-isopropylmalate, via the formation of 2-isopropylmaleate. The polypeptide is 3-isopropylmalate dehydratase small subunit (Azobacteroides pseudotrichonymphae genomovar. CFP2).